Reading from the N-terminus, the 352-residue chain is MDYSMSTALYDIDYGMSEPCQKIDVKQVAARLLPPLYSLVFIFGFVGNLLVVLILITCKKLKSMTDIYLLNLAISDLLFLLTLPLWAHYAAAEWDFGGAMCKVFTGMYHMGYFGGIFFIILLTIDRYLAIVHAVFALKARTVTFGVVTSGVTWVAAILVSLPDIIFTRSQKEGFRCSCSPHFPASQYQFWKNFHTIMRNILSLVLPLLVMIVCYSGILKTLLRCRNEKRRHRAVRLIFAIMVVYFLFWAPYNVVLLLNTFQEFFGLNNCSSSNRLDRAMQVTETLGMTHCCINPVVYAFVGEKFRSYLSAFFRKHVAKRLCKHCPLLPRETPEPASSVYTRSTGEQEISVGL.

The Extracellular portion of the chain corresponds to 1–30; the sequence is MDYSMSTALYDIDYGMSEPCQKIDVKQVAA. The residue at position 3 (tyrosine 3) is a Sulfotyrosine. A glycan (O-linked (GalNAc...) serine) is linked at serine 6. Tyrosine 10 and tyrosine 14 each carry sulfotyrosine. An O-linked (GalNAc...) serine glycan is attached at serine 17. Intrachain disulfides connect cysteine 20/cysteine 269 and cysteine 101/cysteine 178. A helical transmembrane segment spans residues 31 to 58; it reads RLLPPLYSLVFIFGFVGNLLVVLILITC. Residues 59–68 lie on the Cytoplasmic side of the membrane; sequence KKLKSMTDIY. A helical membrane pass occupies residues 69 to 89; it reads LLNLAISDLLFLLTLPLWAHY. Over 90 to 102 the chain is Extracellular; it reads AAAEWDFGGAMCK. A helical membrane pass occupies residues 103-124; sequence VFTGMYHMGYFGGIFFIILLTI. At 125–141 the chain is on the cytoplasmic side; sequence DRYLAIVHAVFALKART. The helical transmembrane segment at 142–166 threads the bilayer; the sequence is VTFGVVTSGVTWVAAILVSLPDIIF. Over 167-198 the chain is Extracellular; the sequence is TRSQKEGFRCSCSPHFPASQYQFWKNFHTIMR. A helical transmembrane segment spans residues 199–218; sequence NILSLVLPLLVMIVCYSGIL. Over 219 to 235 the chain is Cytoplasmic; it reads KTLLRCRNEKRRHRAVR. The helical transmembrane segment at 236–260 threads the bilayer; sequence LIFAIMVVYFLFWAPYNVVLLLNTF. Over 261 to 277 the chain is Extracellular; the sequence is QEFFGLNNCSSSNRLDR. The helical transmembrane segment at 278-301 threads the bilayer; sequence AMQVTETLGMTHCCINPVVYAFVG. Residues 302-352 lie on the Cytoplasmic side of the membrane; it reads EKFRSYLSAFFRKHVAKRLCKHCPLLPRETPEPASSVYTRSTGEQEISVGL. 2 S-palmitoyl cysteine lipidation sites follow: cysteine 321 and cysteine 324. The disordered stretch occupies residues 332-352; it reads PEPASSVYTRSTGEQEISVGL. 4 positions are modified to phosphoserine; by BARK1: serine 336, serine 337, serine 342, and serine 349. Residues 337 to 346 are compositionally biased toward polar residues; that stretch reads SVYTRSTGEQ.

It belongs to the G-protein coupled receptor 1 family. Interacts with PRAF2. Efficient ligand binding to CCL3/MIP-1alpha and CCL4/MIP-1beta requires sulfation, O-glycosylation and sialic acid modifications. Glycosylation on Ser-6 is required for efficient binding of CCL4. Interacts with GRK2. Interacts with ARRB1 and ARRB2. Interacts with CNIH4. Interacts with S100A4; this interaction stimulates T-lymphocyte chemotaxis. Post-translationally, sulfated on at least 2 of the N-terminal tyrosines. Sulfation is required for efficient binding of the chemokines, CCL3 and CCL4. In terms of processing, O-glycosylated, but not N-glycosylated. Ser-6 appears to be the major site. Also sialylated glycans present which contribute to chemokine binding. Ser-17 may also be glycosylated and, if so, with small moieties such as a T-antigen. Palmitoylation in the C-terminal is important for cell surface expression. Post-translationally, phosphorylation on serine residues in the C-terminal is stimulated by binding CC chemokines especially by APO-RANTES.

It is found in the cell membrane. In terms of biological role, receptor for a number of inflammatory CC-chemokines including CCL3/MIP-1-alpha, CCL4/MIP-1-beta and RANTES and subsequently transduces a signal by increasing the intracellular calcium ion level. May play a role in the control of granulocytic lineage proliferation or differentiation. Participates in T-lymphocyte migration to the infection site by acting as a chemotactic receptor. This Oryctolagus cuniculus (Rabbit) protein is C-C chemokine receptor type 5 (CCR5).